We begin with the raw amino-acid sequence, 261 residues long: Phosphatidylglycerol--prolipoprotein diacylglyceryl transferase (261 aa).

4 helical membrane passes run 13 to 33, 50 to 70, 86 to 106, and 112 to 132; these read LQIR…YWYI, VISW…ILFY, WNGG…MYIF, and IDVL…IFFG. Arginine 133 is a binding site for a 1,2-diacyl-sn-glycero-3-phospho-(1'-sn-glycerol). 3 helical membrane-spanning segments follow: residues 169–189, 197–217, and 232–252; these read LYEA…LFFF, GMLS…IEFV, and ITMG…FIKL.

The protein belongs to the Lgt family.

The protein localises to the cell inner membrane. The catalysed reaction is L-cysteinyl-[prolipoprotein] + a 1,2-diacyl-sn-glycero-3-phospho-(1'-sn-glycerol) = an S-1,2-diacyl-sn-glyceryl-L-cysteinyl-[prolipoprotein] + sn-glycerol 1-phosphate + H(+). Its pathway is protein modification; lipoprotein biosynthesis (diacylglyceryl transfer). Functionally, catalyzes the transfer of the diacylglyceryl group from phosphatidylglycerol to the sulfhydryl group of the N-terminal cysteine of a prolipoprotein, the first step in the formation of mature lipoproteins. The protein is Phosphatidylglycerol--prolipoprotein diacylglyceryl transferase of Ehrlichia canis (strain Jake).